The chain runs to 194 residues: dCTP deaminase, dUMP-forming (194 aa).

DCTP-binding positions include 104–109 (RSSLGR), D122, 130–132 (TLE), Q151, Y165, K172, and Q176. Catalysis depends on E132, which acts as the Proton donor/acceptor.

Belongs to the dCTP deaminase family. Homotrimer.

It carries out the reaction dCTP + 2 H2O = dUMP + NH4(+) + diphosphate. It participates in pyrimidine metabolism; dUMP biosynthesis; dUMP from dCTP: step 1/1. Its function is as follows. Bifunctional enzyme that catalyzes both the deamination of dCTP to dUTP and the hydrolysis of dUTP to dUMP without releasing the toxic dUTP intermediate. In Dictyoglomus turgidum (strain DSM 6724 / Z-1310), this protein is dCTP deaminase, dUMP-forming.